A 415-amino-acid polypeptide reads, in one-letter code: Adipocyte plasma membrane-associated protein (415 aa).

Residues 1–29 (MSEADGLRQRRPLRPQVVTDDGQVPEVKE) form a disordered region. At Ser-2 the chain carries N-acetylserine. The Cytoplasmic portion of the chain corresponds to 2-39 (SEADGLRQRRPLRPQVVTDDGQVPEVKEGSSFSGRVFR). The residue at position 19 (Thr-19) is a Phosphothreonine. Residues 40-60 (MTFLMLAVSLAIPLLGAMMLL) form a helical; Signal-anchor for type II membrane protein membrane-spanning segment. Topologically, residues 61-415 (ESPIDPQSFS…FICRLSLQSI (355 aa)) are extracellular. A glycan (N-linked (GlcNAc...) asparagine) is linked at Asn-159.

Belongs to the strictosidine synthase family. Glycosylated in vitro. As to expression, strongly expressed in adipose tissue. Highly expressed in liver, heart, and kidney. Expressed at intermediate level in brain and lung. Weakly expressed in spleen, skeletal muscle and testis.

Its subcellular location is the membrane. Functionally, exhibits strong arylesterase activity with beta-naphthyl acetate and phenyl acetate. May play a role in adipocyte differentiation. This is Adipocyte plasma membrane-associated protein (Apmap) from Mus musculus (Mouse).